We begin with the raw amino-acid sequence, 111 residues long: Large ribosomal subunit protein uL22 (111 aa).

This sequence belongs to the universal ribosomal protein uL22 family. In terms of assembly, part of the 50S ribosomal subunit.

This protein binds specifically to 23S rRNA; its binding is stimulated by other ribosomal proteins, e.g. L4, L17, and L20. It is important during the early stages of 50S assembly. It makes multiple contacts with different domains of the 23S rRNA in the assembled 50S subunit and ribosome. Its function is as follows. The globular domain of the protein is located near the polypeptide exit tunnel on the outside of the subunit, while an extended beta-hairpin is found that lines the wall of the exit tunnel in the center of the 70S ribosome. In Stenotrophomonas maltophilia (strain R551-3), this protein is Large ribosomal subunit protein uL22.